A 523-amino-acid polypeptide reads, in one-letter code: MSQQVIIFDTTLRDGEQALQASLSAKEKLQIALALERMGVDVMEVGFPVSSPGDFESVQTIARTIKNSRVCALARCVEKDIDVAAQALKVADAFRIHTFIATSPMHIATKLRSTLDEVIERAVYMVKRARNYTDDVEFSCEDAGRTPVDDLARVVEAAINAGARTINIPDTVGYTMPFEFAGIISGLYERVPNIDKAIISVHTHDDLGIAVGNSLAAVHAGARQVEGAMNGIGERAGNCALEEVIMAIKVRKDIMNVHTNINHHEIWRTSQTVSQICNMPIPANKAIVGSGAFAHSSGIHQDGVLKNRENYEIMTPESIGLNQIQLNLTSRSGRAAVKHRMEEMGYKDTDYNIDHLYDAFLKLADKKGQVFDYDLEALAFINKQQEEPEHFRLDYFSVQSGSSDIATASVKLACGEEIKAEAANGNGPVDAIYQAINRITGYDVELVKYDLNAKGQGKDALGQVDIVVNHHGRRFHGVGLATDIVESSAKAMVHVLNNIWRAAEVEKELQRKAQNKENNKETV.

Positions 5–267 (VIIFDTTLRD…HTNINHHEIW (263 aa)) constitute a Pyruvate carboxyltransferase domain. Residues Asp14, His202, His204, and Asn238 each coordinate Mn(2+). Residues 392–523 (RLDYFSVQSG…QNKENNKETV (132 aa)) form a regulatory domain region.

It belongs to the alpha-IPM synthase/homocitrate synthase family. LeuA type 1 subfamily. In terms of assembly, homodimer. Requires Mn(2+) as cofactor.

The protein resides in the cytoplasm. The catalysed reaction is 3-methyl-2-oxobutanoate + acetyl-CoA + H2O = (2S)-2-isopropylmalate + CoA + H(+). Its pathway is amino-acid biosynthesis; L-leucine biosynthesis; L-leucine from 3-methyl-2-oxobutanoate: step 1/4. Catalyzes the condensation of the acetyl group of acetyl-CoA with 3-methyl-2-oxobutanoate (2-ketoisovalerate) to form 3-carboxy-3-hydroxy-4-methylpentanoate (2-isopropylmalate). This Salmonella newport (strain SL254) protein is 2-isopropylmalate synthase.